A 233-amino-acid chain; its full sequence is Large ribosomal subunit protein uL3 (233 aa).

It belongs to the universal ribosomal protein uL3 family. In terms of assembly, part of the 50S ribosomal subunit. Forms a cluster with proteins L14 and L19.

Its function is as follows. One of the primary rRNA binding proteins, it binds directly near the 3'-end of the 23S rRNA, where it nucleates assembly of the 50S subunit. In Ureaplasma parvum serovar 3 (strain ATCC 27815 / 27 / NCTC 11736), this protein is Large ribosomal subunit protein uL3.